A 334-amino-acid chain; its full sequence is Dual specificity mitogen-activated protein kinase kinase 6 (334 aa).

Positions 1 to 11 (MSQSKGKKRNP) are enriched in basic residues. The interval 1–34 (MSQSKGKKRNPGLKIPKEAFEQPQTSSTPPRDLD) is disordered. Residues 4 to 19 (SKGKKRNPGLKIPKEA) form a d domain region. Positions 53 to 314 (LEPIMELGRG…YPELMQHPFF (262 aa)) constitute a Protein kinase domain. Residues 59–67 (LGRGAYGVV) and Lys-82 each bind ATP. Asp-179 (proton acceptor) is an active-site residue. At Ser-207 the chain carries (Microbial infection) O-acetylserine; by Yersinia YopJ; alternate. The residue at position 207 (Ser-207) is a Phosphoserine; by MAP3K; alternate. Thr-211 bears the (Microbial infection) O-acetylthreonine; by Yersinia YopJ; alternate mark. The residue at position 211 (Thr-211) is a Phosphothreonine; by MAP3K; alternate. Residues 311-334 (HPFFTLHESKGTDVASFVKLILGD) form a DVD domain region.

This sequence belongs to the protein kinase superfamily. STE Ser/Thr protein kinase family. MAP kinase kinase subfamily. Dimer. Interacts (via its D domain) with its substrates MAPK11, MAPK12, MAPK13 and MAPK14. Interacts (via its DVD domain) with MAP3Ks activators like MAP3K5/ASK1, MAP3K1/MEKK1, MAP3K2/MEKK2, MAP3K3/MEKK3, MAP3K4/MEKK4, MAP3K7/TAK1, MAP3K11/MLK3 and MAP3K17/TAOK2. Interacts with DCTN1. Interacts with EIF2AK2/PKR. In terms of assembly, (Microbial infection) Interacts with Yersinia YopJ. Post-translationally, weakly autophosphorylated. Phosphorylated at Ser-207 and Thr-211 by the majority of M3Ks, such as MAP3K5/ASK1, MAP3K1/MEKK1, MAP3K2/MEKK2, MAP3K3/MEKK3, MAP3K4/MEKK4, MAP3K7/TAK1, MAP3K11/MLK3 and MAP3K17/TAOK2. In terms of processing, in response to genotoxic stress, MAP3K-phosphorylated MAP2K6 is ubiquitinated and degraded by the SCF(FBXO31) complex. (Microbial infection) Acetylation of Ser-207 and Thr-211 by Yersinia YopJ prevents phosphorylation and activation, thus blocking the MAPK signaling pathway. Isoform 2 is only expressed in skeletal muscle. Isoform 1 is expressed in skeletal muscle, heart, and in lesser extent in liver or pancreas.

Its subcellular location is the nucleus. It is found in the cytoplasm. The protein localises to the cytoskeleton. It carries out the reaction L-seryl-[protein] + ATP = O-phospho-L-seryl-[protein] + ADP + H(+). The catalysed reaction is L-threonyl-[protein] + ATP = O-phospho-L-threonyl-[protein] + ADP + H(+). The enzyme catalyses L-tyrosyl-[protein] + ATP = O-phospho-L-tyrosyl-[protein] + ADP + H(+). With respect to regulation, activated by dual phosphorylation on Ser-207 and Thr-211 in response to a variety of cellular stresses, including UV radiation, osmotic shock, hypoxia, inflammatory cytokines, interferon gamma (IFNG), and less often by growth factors. MAP2K6/MKK6 is activated by the majority of M3Ks, such as MAP3K5/ASK1, MAP3K1/MEKK1, MAP3K2/MEKK2, MAP3K3/MEKK3, MAP3K4/MEKK4, MAP3K7/TAK1, MAP3K11/MLK3 and MAP3K17/TAOK2. In terms of biological role, dual specificity protein kinase which acts as an essential component of the MAP kinase signal transduction pathway. With MAP3K3/MKK3, catalyzes the concomitant phosphorylation of a threonine and a tyrosine residue in the MAP kinases p38 MAPK11, MAPK12, MAPK13 and MAPK14 and plays an important role in the regulation of cellular responses to cytokines and all kinds of stresses. Especially, MAP2K3/MKK3 and MAP2K6/MKK6 are both essential for the activation of MAPK11 and MAPK13 induced by environmental stress, whereas MAP2K6/MKK6 is the major MAPK11 activator in response to TNF. MAP2K6/MKK6 also phosphorylates and activates PAK6. The p38 MAP kinase signal transduction pathway leads to direct activation of transcription factors. Nuclear targets of p38 MAP kinase include the transcription factors ATF2 and ELK1. Within the p38 MAPK signal transduction pathway, MAP3K6/MKK6 mediates phosphorylation of STAT4 through MAPK14 activation, and is therefore required for STAT4 activation and STAT4-regulated gene expression in response to IL-12 stimulation. The pathway is also crucial for IL-6-induced SOCS3 expression and down-regulation of IL-6-mediated gene induction; and for IFNG-dependent gene transcription. Has a role in osteoclast differentiation through NF-kappa-B transactivation by TNFSF11, and in endochondral ossification and since SOX9 is another likely downstream target of the p38 MAPK pathway. MAP2K6/MKK6 mediates apoptotic cell death in thymocytes. Acts also as a regulator for melanocytes dendricity, through the modulation of Rho family GTPases. The protein is Dual specificity mitogen-activated protein kinase kinase 6 (MAP2K6) of Homo sapiens (Human).